Here is a 305-residue protein sequence, read N- to C-terminus: Dihydroorotate dehydrogenase B (NAD(+)), catalytic subunit (305 aa).

FMN-binding positions include Ser-23 and 47–48 (KG). Residues Lys-47 and 71-75 (NAIGL) each bind substrate. Residues Asn-101 and Asn-129 each coordinate FMN. Asn-129 is a binding site for substrate. Cys-132 (nucleophile) is an active-site residue. Lys-167 and Ile-193 together coordinate FMN. Position 194–195 (194–195 (NT)) interacts with substrate. Residues Gly-219, 245 to 246 (GG), and 267 to 268 (GT) each bind FMN.

It belongs to the dihydroorotate dehydrogenase family. Type 1 subfamily. As to quaternary structure, heterotetramer of 2 PyrK and 2 PyrD type B subunits. FMN serves as cofactor.

The protein resides in the cytoplasm. It carries out the reaction (S)-dihydroorotate + NAD(+) = orotate + NADH + H(+). Its pathway is pyrimidine metabolism; UMP biosynthesis via de novo pathway; orotate from (S)-dihydroorotate (NAD(+) route): step 1/1. Catalyzes the conversion of dihydroorotate to orotate with NAD(+) as electron acceptor. This Geotalea daltonii (strain DSM 22248 / JCM 15807 / FRC-32) (Geobacter daltonii) protein is Dihydroorotate dehydrogenase B (NAD(+)), catalytic subunit (pyrD).